The primary structure comprises 66 residues: Early E3 7.7 kDa protein (66 aa).

N-linked (GlcNAc...) asparagine; by host glycosylation is found at Asn7 and Asn24. The helical transmembrane segment at 44–64 threads the bilayer; that stretch reads ITILIVIGILILSVILYFLFS.

It is found in the host nucleus membrane. This chain is Early E3 7.7 kDa protein, found in Human adenovirus B serotype 7 (HAdV-7).